A 395-amino-acid polypeptide reads, in one-letter code: Cyclomarin C epoxidase CymV (395 aa).

It belongs to the cytochrome P450 family.

Its function is as follows. Cytochrome P450; part of the gene cluster that mediates the biosynthesis of cyclic heptapeptides, known as cyclomarins and also of cyclic dipeptides, called cyclomarazines, which have both antimicrobial and cytotoxic effects. First, CymD catalyzes the reverse N-prenylation of monomeric L-tryptophan with dimethylallyl diphosphate (DMAPP) to form N-(1,1-dimethylallyl)-tryptophan (r-N-DMAT). The N-(1,1-dimethylallyl)-tryptophan produced by CymD is then combined with a range of standard and nonproteinogenic amino acid substrates to synthesize the peptides, a process that is probably catalyzed by the non-canonical nonribosomal peptide synthetase (NRPS), CymA. Other proteins in the cluster catalyze further modifications of the peptides including CymV which catalyzes the oxidation of olefinic cyclomarins and cyclomarazines to their respective epoxide derivatives. This is Cyclomarin C epoxidase CymV from Salinispora arenicola (strain CNS-205).